A 371-amino-acid polypeptide reads, in one-letter code: DNA replication and repair protein RecF (371 aa).

30 to 37 (GENAQGKT) contacts ATP.

The protein belongs to the RecF family.

Its subcellular location is the cytoplasm. In terms of biological role, the RecF protein is involved in DNA metabolism; it is required for DNA replication and normal SOS inducibility. RecF binds preferentially to single-stranded, linear DNA. It also seems to bind ATP. In Staphylococcus epidermidis (strain ATCC 35984 / DSM 28319 / BCRC 17069 / CCUG 31568 / BM 3577 / RP62A), this protein is DNA replication and repair protein RecF.